Consider the following 641-residue polypeptide: DNA primase (641 aa).

A CHC2-type zinc finger spans residues 41–65 (CPFHDEKSPSFQVSPSKGFFHCFGC). A Toprim domain is found at 262–346 (SRAVVVEGYT…AAETYIAIAP (85 aa)). Mg(2+) contacts are provided by Glu268, Asp317, and Asp319. A disordered region spans residues 444–478 (RDRGGKGPAPDQRQRGGGPQQQAGPMTATPRGPAL).

Belongs to the DnaG primase family. In terms of assembly, monomer. Interacts with DnaB. Zn(2+) is required as a cofactor. Requires Mg(2+) as cofactor.

The catalysed reaction is ssDNA + n NTP = ssDNA/pppN(pN)n-1 hybrid + (n-1) diphosphate.. Its function is as follows. RNA polymerase that catalyzes the synthesis of short RNA molecules used as primers for DNA polymerase during DNA replication. The protein is DNA primase of Streptomyces coelicolor (strain ATCC BAA-471 / A3(2) / M145).